A 364-amino-acid chain; its full sequence is Probable dual-specificity RNA methyltransferase RlmN (364 aa).

Glu107 (proton acceptor) is an active-site residue. The Radical SAM core domain maps to 113-346; it reads HEYGNSVCVT…ATIRREQGSD (234 aa). Cys120 and Cys351 are joined by a disulfide. [4Fe-4S] cluster-binding residues include Cys127, Cys131, and Cys134. Residues 177-178, Ser209, 232-234, and Asn308 each bind S-adenosyl-L-methionine; these read GE and SLH. Cys351 serves as the catalytic S-methylcysteine intermediate.

It belongs to the radical SAM superfamily. RlmN family. [4Fe-4S] cluster serves as cofactor.

It localises to the cytoplasm. The enzyme catalyses adenosine(2503) in 23S rRNA + 2 reduced [2Fe-2S]-[ferredoxin] + 2 S-adenosyl-L-methionine = 2-methyladenosine(2503) in 23S rRNA + 5'-deoxyadenosine + L-methionine + 2 oxidized [2Fe-2S]-[ferredoxin] + S-adenosyl-L-homocysteine. It carries out the reaction adenosine(37) in tRNA + 2 reduced [2Fe-2S]-[ferredoxin] + 2 S-adenosyl-L-methionine = 2-methyladenosine(37) in tRNA + 5'-deoxyadenosine + L-methionine + 2 oxidized [2Fe-2S]-[ferredoxin] + S-adenosyl-L-homocysteine. Its function is as follows. Specifically methylates position 2 of adenine 2503 in 23S rRNA and position 2 of adenine 37 in tRNAs. Confers resistance to some classes of antibiotics. The sequence is that of Probable dual-specificity RNA methyltransferase RlmN from Staphylococcus epidermidis (strain ATCC 35984 / DSM 28319 / BCRC 17069 / CCUG 31568 / BM 3577 / RP62A).